We begin with the raw amino-acid sequence, 282 residues long: MSPVAIIACVCLAVTLTSISPSEAIVPTRELENVFLGRCKDYEITRYLDILPRVRSDCSALWKDFFKAFSFKNPCDLDLGSYKDFFTSAQQQLPKNKVMFWSGVYDEAHDYANTGRKYITLEDTLPGYMLNSLVWCGQRANPGFNEKVCPDFKTCPVQARESFWGMASSSYAHSAEGEVTYMVDGSNPKVPAYRPDSFFGKYELPNLTNKVTRVKVIVLHRLGEKIIEKCGAGSLLDLEKLVKAKHFAFDCVENPRAVLFLLCSDNPNARECRLAKRFYRIA.

The N-terminal stretch at 1-24 is a signal peptide; it reads MSPVAIIACVCLAVTLTSISPSEA. 5 cysteine pairs are disulfide-bonded: cysteine 39–cysteine 58, cysteine 75–cysteine 155, cysteine 136–cysteine 149, cysteine 230–cysteine 251, and cysteine 263–cysteine 272.

Belongs to the ADP-ribosyl cyclase family. Post-translationally, has different isoforms which may be the result of different amounts of phosphorylation. Immature occoyctes. Oocytes.

It localises to the cytoplasmic vesicle. It carries out the reaction NAD(+) = cyclic ADP-beta-D-ribose + nicotinamide + H(+). The catalysed reaction is nicotinate + NADP(+) = nicotinate-adenine dinucleotide phosphate + nicotinamide. The enzyme catalyses 2'-phospho-cyclic ADP-ribose + nicotinate = nicotinate-adenine dinucleotide phosphate. Activity is presumably regulated by its sequestration in vesicles before egg fertilization. After fertilization and upon NADase release, it could then be regulated via its potential phosphorylation sites. Its function is as follows. Synthesizes cyclic ADP-ribose (cADPR), a second messenger for calcium mobilization from endoplasmic reticulum; ADP-ribose is a minor product. Synthesizes the Ca(2+) mobilizer nicotinate-adenine dinucleotide phosphate from 2'-phospho-cADPR and nicotinic acid as well as from NADP(+) and nicotinic acid; with NADP(+) as substrate preferentially catalyzes NADP(+) hydrolysis rather than NAADP(+) synthesis, about 70-fold better at pH 7.4. Has cADPR hydrolase activity at very high enzyme concentrations, which is probably not physiological. The conversion of NAD(+) into ADP-ribose is also only observed at high enzyme concentrations and results from the hydrolysis of cADP-ribose. The sequence is that of ADP-ribosyl cyclase/cyclic ADP-ribose hydrolase from Aplysia californica (California sea hare).